Consider the following 303-residue polypeptide: Probable porphobilinogen deaminase (303 aa).

S-(dipyrrolylmethanemethyl)cysteine is present on cysteine 240.

It belongs to the HMBS family. The cofactor is dipyrromethane.

The catalysed reaction is 4 porphobilinogen + H2O = hydroxymethylbilane + 4 NH4(+). It participates in porphyrin-containing compound metabolism; protoporphyrin-IX biosynthesis; coproporphyrinogen-III from 5-aminolevulinate: step 2/4. Functionally, tetrapolymerization of the monopyrrole PBG into the hydroxymethylbilane pre-uroporphyrinogen in several discrete steps. This chain is Probable porphobilinogen deaminase, found in Hyperthermus butylicus (strain DSM 5456 / JCM 9403 / PLM1-5).